Consider the following 42-residue polypeptide: Photosystem I reaction center subunit IX (42 aa).

The chain crosses the membrane as a helical span at residues 7–27 (YLSTAPVIATIWFGFLAGLLI).

It belongs to the PsaJ family.

Its subcellular location is the plastid. It is found in the chloroplast thylakoid membrane. In terms of biological role, may help in the organization of the PsaE and PsaF subunits. The chain is Photosystem I reaction center subunit IX from Chaetosphaeridium globosum (Charophycean green alga).